The following is a 106-amino-acid chain: ATP-dependent Clp protease adapter protein ClpS (106 aa).

This sequence belongs to the ClpS family. In terms of assembly, binds to the N-terminal domain of the chaperone ClpA.

In terms of biological role, involved in the modulation of the specificity of the ClpAP-mediated ATP-dependent protein degradation. This Serratia proteamaculans (strain 568) protein is ATP-dependent Clp protease adapter protein ClpS.